The chain runs to 333 residues: 4-hydroxy-3-methylbut-2-enyl diphosphate reductase (333 aa).

C34 serves as a coordination point for [4Fe-4S] cluster. (2E)-4-hydroxy-3-methylbut-2-enyl diphosphate contacts are provided by H63 and H96. The dimethylallyl diphosphate site is built by H63 and H96. Residues H63 and H96 each coordinate isopentenyl diphosphate. Residue C118 coordinates [4Fe-4S] cluster. Residue H146 participates in (2E)-4-hydroxy-3-methylbut-2-enyl diphosphate binding. A dimethylallyl diphosphate-binding site is contributed by H146. H146 provides a ligand contact to isopentenyl diphosphate. E148 functions as the Proton donor in the catalytic mechanism. T186 is a binding site for (2E)-4-hydroxy-3-methylbut-2-enyl diphosphate. Position 216 (C216) interacts with [4Fe-4S] cluster. (2E)-4-hydroxy-3-methylbut-2-enyl diphosphate is bound by residues S244, S245, N246, and S289. Dimethylallyl diphosphate is bound by residues S244, S245, N246, and S289. Isopentenyl diphosphate is bound by residues S244, S245, N246, and S289.

Belongs to the IspH family. It depends on [4Fe-4S] cluster as a cofactor.

It carries out the reaction isopentenyl diphosphate + 2 oxidized [2Fe-2S]-[ferredoxin] + H2O = (2E)-4-hydroxy-3-methylbut-2-enyl diphosphate + 2 reduced [2Fe-2S]-[ferredoxin] + 2 H(+). The enzyme catalyses dimethylallyl diphosphate + 2 oxidized [2Fe-2S]-[ferredoxin] + H2O = (2E)-4-hydroxy-3-methylbut-2-enyl diphosphate + 2 reduced [2Fe-2S]-[ferredoxin] + 2 H(+). It functions in the pathway isoprenoid biosynthesis; dimethylallyl diphosphate biosynthesis; dimethylallyl diphosphate from (2E)-4-hydroxy-3-methylbutenyl diphosphate: step 1/1. Its pathway is isoprenoid biosynthesis; isopentenyl diphosphate biosynthesis via DXP pathway; isopentenyl diphosphate from 1-deoxy-D-xylulose 5-phosphate: step 6/6. Catalyzes the conversion of 1-hydroxy-2-methyl-2-(E)-butenyl 4-diphosphate (HMBPP) into a mixture of isopentenyl diphosphate (IPP) and dimethylallyl diphosphate (DMAPP). Acts in the terminal step of the DOXP/MEP pathway for isoprenoid precursor biosynthesis. In Mycobacterium sp. (strain KMS), this protein is 4-hydroxy-3-methylbut-2-enyl diphosphate reductase.